Reading from the N-terminus, the 397-residue chain is Lysophospholipid transporter LplT (397 aa).

11 consecutive transmembrane segments (helical) span residues 16–36, 53–73, 91–111, 139–159, 164–184, 227–247, 253–273, 281–301, 305–325, 352–372, and 373–393; these read MLAV…LLFA, VLQM…GQFA, LGAG…LVGI, LMES…GILA, LAAL…NLWI, LFWG…PVAL, AMPT…AGAA, TVSR…AFAV, LLPA…FIVP, NVAM…GVPP, and VAVG…LWVW.

This sequence belongs to the major facilitator superfamily. LplT (TC 2.A.1.42) family.

Its subcellular location is the cell inner membrane. Its function is as follows. Catalyzes the facilitated diffusion of 2-acyl-glycero-3-phosphoethanolamine (2-acyl-GPE) into the cell. This Klebsiella pneumoniae (strain 342) protein is Lysophospholipid transporter LplT.